The sequence spans 204 residues: Abscisic acid receptor PYL3 (204 aa).

The START-like stretch occupies residues His-40–Glu-191. A disulfide bond links Cys-47 and Cys-172. Abscisate-binding positions include Lys-76, Ala-104 to Glu-109, Arg-131 to Ser-137, and Glu-156. A Gate loop motif is present at residues Ser-100 to Ala-104. The short motif at His-130–Leu-132 is the Latch loop element.

This sequence belongs to the PYR/PYL/RCAR abscisic acid intracellular receptor family. In terms of assembly, monomer. Interacts with PP2C50. Binding to PP2C50 is dependent on the presence of abscisic acid (ABA). Interacts with PP2C30 and PP2C53.

Its subcellular location is the cytoplasm. It localises to the cytosol. It is found in the nucleus. Involved in abscisic acid (ABA) signaling during seed germination and abiotic stress response. Acts as a positive regulator of ABA-mediated inhibition of seed germination, and tolerance to drought and cold stresses. Together with PP2C50 and SAPK10, may form an ABA signaling module involved in stress response. Inhibits the protein phosphatases PP2C06 and PP2C09 when activated by abscisic acid (ABA). The chain is Abscisic acid receptor PYL3 from Oryza sativa subsp. japonica (Rice).